A 100-amino-acid polypeptide reads, in one-letter code: Urease subunit gamma (100 aa).

The protein belongs to the urease gamma subunit family. As to quaternary structure, heterotrimer of UreA (gamma), UreB (beta) and UreC (alpha) subunits. Three heterotrimers associate to form the active enzyme.

The protein localises to the cytoplasm. It catalyses the reaction urea + 2 H2O + H(+) = hydrogencarbonate + 2 NH4(+). Its pathway is nitrogen metabolism; urea degradation; CO(2) and NH(3) from urea (urease route): step 1/1. The chain is Urease subunit gamma from Halalkalibacterium halodurans (strain ATCC BAA-125 / DSM 18197 / FERM 7344 / JCM 9153 / C-125) (Bacillus halodurans).